A 558-amino-acid chain; its full sequence is MDQNSYRRRSSPIRTTTGGSKSVNFSELLQMKYLSSGTMKLTRTFTTCLIVFSVLVAFSMIFHQHPSDSNRIMGFAEARVLDAGVFPNVTNINSDKLLGGLLASGFDEDSCLSRYQSVHYRKPSPYKPSSYLISKLRNYEKLHKRCGPGTESYKKALKQLDQEHIDGDGECKYVVWISFSGLGNRILSLASVFLYALLTDRVLLVDRGKDMDDLFCEPFLGMSWLLPLDFPMTDQFDGLNQESSRCYGYMVKNQVIDTEGTLSHLYLHLVHDYGDHDKMFFCEGDQTFIGKVPWLIVKTDNYFVPSLWLIPGFDDELNKLFPQKATVFHHLGRYLFHPTNQVWGLVTRYYEAYLSHADEKIGIQVRVFDEDPGPFQHVMDQISSCTQKEKLLPEVDTLVERSRHVNTPKHKAVLVTSLNAGYAENLKSMYWEYPTSTGEIIGVHQPSQEGYQQTEKKMHNGKALAEMYLLSLTDNLVTSAWSTFGYVAQGLGGLKPWILYRPENRTTPDPSCGRAMSMEPCFHSPPFYDCKAKTGIDTGTLVPHVRHCEDISWGLKLV.

Residues 1–43 (MDQNSYRRRSSPIRTTTGGSKSVNFSELLQMKYLSSGTMKLTR) are Cytoplasmic-facing. Residues 44–64 (TFTTCLIVFSVLVAFSMIFHQ) form a helical; Signal-anchor for type II membrane protein membrane-spanning segment. Topologically, residues 65–558 (HPSDSNRIMG…EDISWGLKLV (494 aa)) are lumenal. N88 and N504 each carry an N-linked (GlcNAc...) asparagine glycan.

The protein belongs to the glycosyltransferase 37 family. In terms of assembly, homodimer. Interacts with MUR3, XLT2, XXT2 and XXT5. Expressed in roots, stems, leaves, flowers, siliques and seedlings.

The protein localises to the golgi apparatus. Its subcellular location is the golgi stack membrane. The protein resides in the golgi apparatus membrane. Involved in cell wall biosynthesis. Is both necessary and sufficient for the addition of the terminal fucosyl residue on xyloglucan side chains, but is not involved in the fucosylation of other cell wall components. Associates with other xyloglucan-synthesizing enzymes to form multiprotein complexes for xyloglucan synthesis in the Golgi. This chain is Galactoside 2-alpha-L-fucosyltransferase (FUT1), found in Arabidopsis thaliana (Mouse-ear cress).